Consider the following 1538-residue polypeptide: Myosin-9 (1538 aa).

Residues 16 to 65 (SIGSHVWFEDPEVAWIDGEVEKINGQEVVIQATTGKKVTAKLSKIYPKDV) form the Myosin N-terminal SH3-like domain. The region spanning 70-740 (GGVDDMTKLS…QMAELDARRA (671 aa)) is the Myosin motor domain. Residues 164–171 (GESGAGKT) and 217–225 (NNNSSRFGK) contribute to the ATP site. 4 actin-binding regions span residues 503 to 537 (LIEK…YQTF), 539 to 562 (THKR…AGEV), 597 to 621 (FPPL…KLQL), and 621 to 643 (LQQL…KPNN). IQ domains are found at residues 743-772 (LSSA…ATIS), 766-795 (LRKA…EAAA), 791-820 (REAA…ASLV), 814-843 (LHVA…TKAA), 839-868 (QTKA…GVVL), and 862-891 (LKNG…AARE). Positions 892-1064 (TGALKEAKDM…VLRQQAVSMA (173 aa)) form a coiled coil. The span at 1017–1032 (SLEDKKKKLEETEKKG) shows a compositional bias: basic and acidic residues. Disordered regions lie at residues 1017 to 1041 (SLED…SLTR) and 1098 to 1121 (SHSI…NEKQ). Residues 1168 to 1481 (DRIIQTIGHA…IANMRVLMTE (314 aa)) form the Dilute domain.

This sequence belongs to the TRAFAC class myosin-kinesin ATPase superfamily. Myosin family. Plant myosin class XI subfamily. In terms of assembly, homodimer.

Myosin heavy chain that is required for the cell cycle-regulated transport of various organelles and proteins for their segregation. Functions by binding with its tail domain to receptor proteins on organelles and exerting force with its N-terminal motor domain against actin filaments, thereby transporting its cargo along polarized actin cables. Involved in trafficking of Golgi stacks and mitochondria. The polypeptide is Myosin-9 (XI-C) (Arabidopsis thaliana (Mouse-ear cress)).